The following is a 62-amino-acid chain: Large ribosomal subunit protein eL24 (62 aa).

The Zn(2+) site is built by C6, C9, C32, and C36. Residues 6–36 form a C4-type zinc finger; sequence CSFCEGTIEPGCGKKYVKKDGSVMHFCSSKC.

This sequence belongs to the eukaryotic ribosomal protein eL24 family. Part of the 50S ribosomal subunit. Forms a cluster with proteins L3 and L14. Zn(2+) is required as a cofactor.

In terms of biological role, binds to the 23S rRNA. The protein is Large ribosomal subunit protein eL24 of Methanococcus maripaludis (strain C5 / ATCC BAA-1333).